The chain runs to 201 residues: FMN-dependent NADH:quinone oxidoreductase (201 aa).

Residues Ser9 and 16-18 (SYS) each bind FMN.

This sequence belongs to the azoreductase type 1 family. In terms of assembly, homodimer. The cofactor is FMN.

The enzyme catalyses 2 a quinone + NADH + H(+) = 2 a 1,4-benzosemiquinone + NAD(+). The catalysed reaction is N,N-dimethyl-1,4-phenylenediamine + anthranilate + 2 NAD(+) = 2-(4-dimethylaminophenyl)diazenylbenzoate + 2 NADH + 2 H(+). In terms of biological role, quinone reductase that provides resistance to thiol-specific stress caused by electrophilic quinones. Functionally, also exhibits azoreductase activity. Catalyzes the reductive cleavage of the azo bond in aromatic azo compounds to the corresponding amines. The protein is FMN-dependent NADH:quinone oxidoreductase of Mesomycoplasma hyopneumoniae (strain 232) (Mycoplasma hyopneumoniae).